A 146-amino-acid polypeptide reads, in one-letter code: Transcriptional regulator MraZ (146 aa).

SpoVT-AbrB domains are found at residues 9–55 and 81–124; these read TSAL…PRPV and AMDV…DAQR.

This sequence belongs to the MraZ family. As to quaternary structure, forms oligomers.

It is found in the cytoplasm. Its subcellular location is the nucleoid. The sequence is that of Transcriptional regulator MraZ from Leptothrix cholodnii (strain ATCC 51168 / LMG 8142 / SP-6) (Leptothrix discophora (strain SP-6)).